The following is a 304-amino-acid chain: Glycine--tRNA ligase alpha subunit (304 aa).

Belongs to the class-II aminoacyl-tRNA synthetase family. In terms of assembly, tetramer of two alpha and two beta subunits.

It localises to the cytoplasm. It carries out the reaction tRNA(Gly) + glycine + ATP = glycyl-tRNA(Gly) + AMP + diphosphate. The polypeptide is Glycine--tRNA ligase alpha subunit (Pectobacterium carotovorum subsp. carotovorum (strain PC1)).